Reading from the N-terminus, the 2316-residue chain is Receptor-type tyrosine-protein phosphatase zeta (2316 aa).

The first 24 residues, 1-24 (MRILQSFLACVQLLCVCRLDWAYG), serve as a signal peptide directing secretion. At 25 to 1637 (YYRQQRKLVE…LAEGLESEKK (1613 aa)) the chain is on the extracellular side. The Alpha-carbonic anhydrase domain occupies 36 to 300 (IGWSYTGALN…KFSRQVFSSY (265 aa)). 2 cysteine pairs are disulfide-bonded: C56–C240 and C133–C264. N105, N134, N223, N232, N324, N381, and N497 each carry an N-linked (GlcNAc...) asparagine glycan. The Fibronectin type-III domain maps to 314-413 (EPENVQADPE…LIVDMPTEDA (100 aa)). 2 disordered regions span residues 433–499 (YGKG…LNTS) and 518–537 (LPSQIGTNLPPHSVEGTSAS). N552 is a glycosylation site (N-linked (GlcNAc...) asparagine). 2 positions are modified to phosphoserine: S572 and S576. 2 disordered regions span residues 586–624 (KLDSGADDSSGSSPASSTVPFSTDNLSHGYTSSSDTPEA) and 636–720 (RNAL…EMPH). A compositionally biased stretch (low complexity) spans 592 to 602 (DDSSGSSPASS). Residue S595 is glycosylated (O-linked (Xyl...) (chondroitin sulfate) serine). The segment covering 603-621 (TVPFSTDNLSHGYTSSSDT) has biased composition (polar residues). N610 is a glycosylation site (N-linked (GlcNAc...) asparagine). S645 carries the phosphoserine; alternate modification. Residue S645 is glycosylated (O-linked (Xyl...) (chondroitin sulfate) serine; alternate). At S647 the chain carries Phosphoserine. Residues 666–675 (TDLTTQSETG) are compositionally biased toward polar residues. N685 carries an N-linked (GlcNAc...) asparagine glycan. A compositionally biased stretch (polar residues) spans 699 to 711 (ETFSPDATASRGP). N786 is a glycosylation site (N-linked (GlcNAc...) asparagine). S1005 carries O-linked (Xyl...) (chondroitin sulfate) serine glycosylation. 2 N-linked (GlcNAc...) asparagine glycosylation sites follow: N1025 and N1058. Disordered stretches follow at residues 1141 to 1172 (QASGDTWLKPGLSTNSEPALSDTASSEVSHPS), 1204 to 1228 (KTALPSGPRDPVLTETPMVEQSSSS), 1401 to 1521 (LLPS…DGRE), and 1545 to 1622 (TSDE…NSSH). The segment covering 1152-1172 (LSTNSEPALSDTASSEVSHPS) has biased composition (polar residues). A compositionally biased stretch (polar residues) spans 1401-1413 (LLPSKATSKPTHS). Residues 1425–1439 (EDGDDYDDDDYDDID) show a composition bias toward acidic residues. The N-linked (GlcNAc...) asparagine glycan is linked to N1463. The span at 1464–1478 (DSDTQESSLVDQSDP) shows a compositional bias: polar residues. Residues S1550 and S1552 are each glycosylated (O-linked (Xyl...) (chondroitin sulfate) serine). 2 stretches are compositionally biased toward polar residues: residues 1555–1569 (GTSDSLNDNETSTDF) and 1595–1609 (PRSSTPSVTSGHSGV). N-linked (GlcNAc...) asparagine glycosylation occurs at N1563. Residues 1610–1621 (SNSSEAEASNSS) are compositionally biased toward low complexity. N-linked (GlcNAc...) asparagine glycans are attached at residues N1611 and N1619. The helical transmembrane segment at 1638–1663 (AVIPLVIVSALTFICLVVLVGILIYW) threads the bilayer. The Cytoplasmic segment spans residues 1664 to 2316 (RKCFQTAHFY…NIAESLESLV (653 aa)). Phosphothreonine occurs at positions 1685 and 1688. Tyrosine-protein phosphatase domains lie at 1718–1993 (FTEE…LVEA) and 2024–2283 (LEKQ…VLSL). Substrate-binding positions include D1902, 1934 to 1940 (CSAGVGR), and Q1978. The active-site Phosphocysteine intermediate is C1934. Residue S2056 is modified to Phosphoserine.

Belongs to the protein-tyrosine phosphatase family. Receptor class 5 subfamily. Interacts with tenascin. Interacts with N-CAM and NG-CAM. The carbonic-anhydrase like domain interacts with CNTN1 (contactin). Interacts with PTN. Interaction with PTN promotes formation of homooligomers; oligomerization impairs phosphatase activity. Interacts (via chondroitin sulfate chains) with MDK (via C-terminal); this interaction is inhibited by PTN; this interaction promotes neuronal migration. In terms of tissue distribution, nervous tissue specific.

The protein resides in the cell membrane. It is found in the secreted. It catalyses the reaction O-phospho-L-tyrosyl-[protein] + H2O = L-tyrosyl-[protein] + phosphate. Its function is as follows. Protein tyrosine phosphatase that negatively regulates oligodendrocyte precursor proliferation in the embryonic spinal cord. Required for normal differentiation of the precursor cells into mature, fully myelinating oligodendrocytes. May play a role in protecting oligondendrocytes against apoptosis. May play a role in the establishment of contextual memory, probably via the dephosphorylation of proteins that are part of important signaling cascades. Isoform 3 (phosphacan), previously designated 3F8 chondroitin sulfate proteoglycan or 3H1 keratan sulfate proteoglycan depending on the glycosylation status, is a soluble nervous tissue-specific proteoglycan. It is synthesized by glia and binds to neurons and to the neural cell adhesion molecules tenascin, N-CAM or NG-CAM but not to laminin and fibronectin. Phosphacan acts as a potent inhibitor of cell adhesion and neurite outgrowth. The sequence is that of Receptor-type tyrosine-protein phosphatase zeta (Ptprz1) from Rattus norvegicus (Rat).